Consider the following 383-residue polypeptide: Chitinase-3-like protein 1 (383 aa).

An N-terminal signal peptide occupies residues 1-21; that stretch reads MGVKASQTGFVVLVLLQCCSA. Positions 22–383 constitute a GH18 domain; the sequence is YKLVCYYTSW…NAIKDALAAT (362 aa). The cysteines at positions 26 and 51 are disulfide-linked. An N-linked (GlcNAc...) asparagine glycan is attached at N60. Chitin-binding positions include 70-71, 97-100, Y141, 204-207, and R263; these read EW, GGWN, and MTYD. Residues C300 and C364 are joined by a disulfide bond. An important for AKT1 activation and IL8 production region spans residues 324–338; it reads QWVGYDDQESVKSKV. W352 is a binding site for chitin.

The protein belongs to the glycosyl hydrolase 18 family. Monomer. Glycosylated. Present in activated macrophages, articular chondrocytes, synovial cells as well as in liver. Very low or undetectable expression in non-inflammatory colon. Undetectable in muscle tissues, lung, pancreas, mononuclear cells, or fibroblasts.

Its subcellular location is the secreted. The protein resides in the extracellular space. It localises to the cytoplasm. It is found in the perinuclear region. The protein localises to the endoplasmic reticulum. Carbohydrate-binding lectin with a preference for chitin. Has no chitinase activity. May play a role in tissue remodeling and in the capacity of cells to respond to and cope with changes in their environment. Plays a role in T-helper cell type 2 (Th2) inflammatory response and IL-13-induced inflammation, regulating allergen sensitization, inflammatory cell apoptosis, dendritic cell accumulation and M2 macrophage differentiation. Facilitates invasion of pathogenic enteric bacteria into colonic mucosa and lymphoid organs. Mediates activation of AKT1 signaling pathway and subsequent IL8 production in colonic epithelial cells. Regulates antibacterial responses in lung by contributing to macrophage bacterial killing, controlling bacterial dissemination and augmenting host tolerance. Also regulates hyperoxia-induced injury, inflammation and epithelial apoptosis in lung. This chain is Chitinase-3-like protein 1 (CHI3L1), found in Homo sapiens (Human).